A 338-amino-acid chain; its full sequence is L-serine dehydratase (338 aa).

The residue at position 39 (lysine 39) is an N6-(pyridoxal phosphate)lysine.

Belongs to the serine/threonine dehydratase family. Pyridoxal 5'-phosphate is required as a cofactor.

The protein localises to the cytoplasm. The enzyme catalyses L-serine = pyruvate + NH4(+). The protein operates within carbohydrate biosynthesis; gluconeogenesis. The chain is L-serine dehydratase (SDL1) from Saccharomyces cerevisiae (Baker's yeast).